Reading from the N-terminus, the 417-residue chain is Arginine biosynthesis bifunctional protein ArgJ (417 aa).

Residues Thr162, Lys188, Thr199, Glu289, Asn412, and Ser417 each coordinate substrate. Residue Thr199 is the Nucleophile of the active site.

The protein belongs to the ArgJ family. As to quaternary structure, heterotetramer of two alpha and two beta chains.

It localises to the cytoplasm. The enzyme catalyses N(2)-acetyl-L-ornithine + L-glutamate = N-acetyl-L-glutamate + L-ornithine. The catalysed reaction is L-glutamate + acetyl-CoA = N-acetyl-L-glutamate + CoA + H(+). It functions in the pathway amino-acid biosynthesis; L-arginine biosynthesis; L-ornithine and N-acetyl-L-glutamate from L-glutamate and N(2)-acetyl-L-ornithine (cyclic): step 1/1. Its pathway is amino-acid biosynthesis; L-arginine biosynthesis; N(2)-acetyl-L-ornithine from L-glutamate: step 1/4. In terms of biological role, catalyzes two activities which are involved in the cyclic version of arginine biosynthesis: the synthesis of N-acetylglutamate from glutamate and acetyl-CoA as the acetyl donor, and of ornithine by transacetylation between N(2)-acetylornithine and glutamate. This is Arginine biosynthesis bifunctional protein ArgJ from Nitrobacter winogradskyi (strain ATCC 25391 / DSM 10237 / CIP 104748 / NCIMB 11846 / Nb-255).